Consider the following 340-residue polypeptide: Short-chain dehydrogenase/reductase ffsI (340 aa).

Residues Leu-46, Arg-71, Asp-96, Asn-123, Tyr-211, and Lys-215 each contribute to the NADP(+) site. Tyr-211 (proton acceptor) is an active-site residue. Lys-215 functions as the Lowers pKa of active site Tyr in the catalytic mechanism.

The protein belongs to the short-chain dehydrogenases/reductases (SDR) family.

It functions in the pathway mycotoxin biosynthesis. Functionally, short-chain dehydrogenase/reductase; part of the gene cluster that mediates the biosynthesis of the cytotoxic leucine-containing cytochalasans, including aspochalasin C, aspochalasin E, TMC-169, flavichalasine F, aspergillin PZ, aspochalasin M and flavichalasine G. The first step in the pathway is catalyzed by the hybrid PKS-NRPS ffsA that utilizes 8 units of malonyl-CoA to iteratively assemble the octaketide chain before addition of L-leucine by the C-terminal NRPS modules. Because ffsA lacks a designated enoylreductase (ER) domain, the required activity is provided the enoyl reductase fssC. The methyltransferase (MT) domain of ffsA catalyzes the alpha-methylation at C10 and C14 using S-adenosyl-L-methionine as the methyl-donating cosubstrate. Reduction by the hydrolyase ffsE, followed by dehydration and intra-molecular Diels-Alder cyclization by the Diels-Alderase ffsF then yield the required isoindolone-fused macrocycle. A number of oxidative steps catalyzed by the tailoring cytochrome P450 monooxygenase ffsD, the FAD-linked oxidoreductase ffsJ and the short-chain dehydrogenase/reductase ffsI, are further required to afford the final products. The sequence is that of Short-chain dehydrogenase/reductase ffsI from Aspergillus flavipes.